Here is a 255-residue protein sequence, read N- to C-terminus: 3-deoxy-manno-octulosonate cytidylyltransferase (255 aa).

The protein belongs to the KdsB family.

The protein resides in the cytoplasm. It carries out the reaction 3-deoxy-alpha-D-manno-oct-2-ulosonate + CTP = CMP-3-deoxy-beta-D-manno-octulosonate + diphosphate. It participates in nucleotide-sugar biosynthesis; CMP-3-deoxy-D-manno-octulosonate biosynthesis; CMP-3-deoxy-D-manno-octulosonate from 3-deoxy-D-manno-octulosonate and CTP: step 1/1. The protein operates within bacterial outer membrane biogenesis; lipopolysaccharide biosynthesis. Functionally, activates KDO (a required 8-carbon sugar) for incorporation into bacterial lipopolysaccharide in Gram-negative bacteria. The sequence is that of 3-deoxy-manno-octulosonate cytidylyltransferase from Psychromonas ingrahamii (strain DSM 17664 / CCUG 51855 / 37).